The following is a 341-amino-acid chain: Protein pelota homolog (341 aa).

Belongs to the eukaryotic release factor 1 family. Pelota subfamily. Monomer. A divalent metal cation serves as cofactor.

Its subcellular location is the cytoplasm. Functionally, may function in recognizing stalled ribosomes, interact with stem-loop structures in stalled mRNA molecules, and effect endonucleolytic cleavage of the mRNA. May play a role in the release non-functional ribosomes and degradation of damaged mRNAs. Has endoribonuclease activity. This is Protein pelota homolog from Methanoregula boonei (strain DSM 21154 / JCM 14090 / 6A8).